Reading from the N-terminus, the 442-residue chain is MNRLRRKACVALLLFTLFIFGTMMGLRTLKPTDGFSDLAPGMELMPLVGERMEQRPNHLIESAGQNGGLHSDTKIVFSNSGPDHSIFYDIHIFYYLWYGSPQMDSSYIHWDHVLVPHWDPKIAASHPKGRHNPPDDIASSYYPELGPYSSRDPEVIESHMAQIEAAAAGVVVLSWYPPGVADEHGKPSEDLVPAVMDAAHKHSIKVAFHLQPYKGRTDISVHDNIKYIIDTYGTHGAFYRFKSSTGKILPLFYVYDSYLTPPETWAELLTIRGSHSLRGTPYDGIFIALIVEERHKQDILAGGFDGMYTYFASNGFSFGSSHQNWKAIKAFCDKNNLLFVPSAGPGYMDTAVRPWNNHNTRNRVNGRYYETSLQAAMSVRPDIITITSFNEWHEGTQIERAVPKKTVARLYLDYKPHQPDHYLELTKKWAEHFSKEKEQWLM.

Over 1–8 the chain is Cytoplasmic; it reads MNRLRRKA. Residues 9–29 form a helical; Signal-anchor for type II membrane protein membrane-spanning segment; it reads CVALLLFTLFIFGTMMGLRTL. At 30 to 442 the chain is on the lumenal side; it reads KPTDGFSDLA…FSKEKEQWLM (413 aa).

The protein belongs to the glycosyl hydrolase 99 family.

Its subcellular location is the golgi apparatus membrane. The chain is Glycoprotein endo-alpha-1,2-mannosidase-like protein (maneal) from Danio rerio (Zebrafish).